The chain runs to 825 residues: Tuftelin-interacting protein 11 (825 aa).

The interval 1–135 is disordered; it reads MSMSHLYGKD…RTFAGGIKSN (135 aa). Residues 11–25 show a composition bias toward acidic residues; it reads EDSDGVEMENFEITD. Basic and acidic residues-rich tracts occupy residues 41–61 and 85–114; these read QTKE…DERP and PAAE…EAKK. Over residues 122–135 the composition is skewed to polar residues; the sequence is KPSQRTFAGGIKSN. The G-patch domain occupies 145 to 191; sequence TKGIGQKLLQKMGYVQGRGLGKNAQGIIAPIEAKQRKGKGAVGAYGS.

This sequence belongs to the TFP11/STIP family. In terms of assembly, identified in the spliceosome C complex.

Its subcellular location is the nucleus. In terms of biological role, involved in pre-mRNA splicing, specifically in spliceosome disassembly during late-stage splicing events. In Xenopus tropicalis (Western clawed frog), this protein is Tuftelin-interacting protein 11 (tfip11).